The primary structure comprises 160 residues: Lipoprotein signal peptidase (160 aa).

The next 2 membrane-spanning stretches (helical) occupy residues threonine 60–leucine 80 and leucine 84–isoleucine 104. Catalysis depends on residues aspartate 118 and aspartate 132. The chain crosses the membrane as a helical span at residues threonine 127–leucine 147.

It belongs to the peptidase A8 family.

It localises to the cell membrane. It catalyses the reaction Release of signal peptides from bacterial membrane prolipoproteins. Hydrolyzes -Xaa-Yaa-Zaa-|-(S,diacylglyceryl)Cys-, in which Xaa is hydrophobic (preferably Leu), and Yaa (Ala or Ser) and Zaa (Gly or Ala) have small, neutral side chains.. The protein operates within protein modification; lipoprotein biosynthesis (signal peptide cleavage). Functionally, this protein specifically catalyzes the removal of signal peptides from prolipoproteins. The protein is Lipoprotein signal peptidase of Dehalococcoides mccartyi (strain ATCC BAA-2266 / KCTC 15142 / 195) (Dehalococcoides ethenogenes (strain 195)).